A 256-amino-acid chain; its full sequence is Small ribosomal subunit protein eS1 (256 aa).

A2 carries the post-translational modification N-acetylalanine; partial.

The protein belongs to the eukaryotic ribosomal protein eS1 family. In terms of assembly, component of the small ribosomal subunit. Mature ribosomes consist of a small (40S) and a large (60S) subunit. The 40S subunit contains about 33 different proteins and 1 molecule of RNA (18S). The 60S subunit contains about 49 different proteins and 3 molecules of RNA (25S, 5.8S and 5S).

It localises to the cytoplasm. The chain is Small ribosomal subunit protein eS1 from Lachancea thermotolerans (strain ATCC 56472 / CBS 6340 / NRRL Y-8284) (Yeast).